A 552-amino-acid chain; its full sequence is CTP synthase (552 aa).

Residues 1 to 270 (MTKFVFVTGG…DGLICDKLRL (270 aa)) form an amidoligase domain region. Position 13 (serine 13) interacts with CTP. Serine 13 contacts UTP. Residues 14–19 (SLGKGI) and aspartate 71 each bind ATP. Positions 71 and 144 each coordinate Mg(2+). Residues 151–153 (DIE), 191–196 (KTKPTQ), and lysine 227 each bind CTP. Residues 191-196 (KTKPTQ) and lysine 227 each bind UTP. The Glutamine amidotransferase type-1 domain occupies 295 to 548 (QIAMVGKYVE…IKAAVEHQKP (254 aa)). Glycine 357 is a binding site for L-glutamine. Residue cysteine 384 is the Nucleophile; for glutamine hydrolysis of the active site. L-glutamine is bound by residues 385–388 (LGMQ), glutamate 408, and arginine 474. Catalysis depends on residues histidine 521 and glutamate 523.

This sequence belongs to the CTP synthase family. In terms of assembly, homotetramer.

It carries out the reaction UTP + L-glutamine + ATP + H2O = CTP + L-glutamate + ADP + phosphate + 2 H(+). The enzyme catalyses L-glutamine + H2O = L-glutamate + NH4(+). The catalysed reaction is UTP + NH4(+) + ATP = CTP + ADP + phosphate + 2 H(+). Its pathway is pyrimidine metabolism; CTP biosynthesis via de novo pathway; CTP from UDP: step 2/2. With respect to regulation, allosterically activated by GTP, when glutamine is the substrate; GTP has no effect on the reaction when ammonia is the substrate. The allosteric effector GTP functions by stabilizing the protein conformation that binds the tetrahedral intermediate(s) formed during glutamine hydrolysis. Inhibited by the product CTP, via allosteric rather than competitive inhibition. In terms of biological role, catalyzes the ATP-dependent amination of UTP to CTP with either L-glutamine or ammonia as the source of nitrogen. Regulates intracellular CTP levels through interactions with the four ribonucleotide triphosphates. The chain is CTP synthase from Acidovorax ebreus (strain TPSY) (Diaphorobacter sp. (strain TPSY)).